Here is a 230-residue protein sequence, read N- to C-terminus: Secretory carrier-associated membrane protein 4 (230 aa).

At 1 to 39 (MAGKENNFPPLPPFLPLKPCFYQDFSDEIPVEHQVLVKR) the chain is on the cytoplasmic side. 4 helical membrane passes run 40-60 (IYRLWMFYCATLGVNLVACLA), 61-81 (WWIAGGAGANFGLALLWLVLF), 106-126 (MTFFFIFGAQFVLTVIQAIGF), and 149-169 (VVMLVPAILFSLSALVMAVTI). The Cytoplasmic segment spans residues 170 to 230 (VKVHRIYRGA…SYSSSGGHWP (61 aa)). Phosphothreonine is present on threonine 194.

This sequence belongs to the SCAMP family.

Its subcellular location is the membrane. Probably involved in membrane protein trafficking. This chain is Secretory carrier-associated membrane protein 4 (Scamp4), found in Mus musculus (Mouse).